The following is a 362-amino-acid chain: Probable endopolygalacturonase B (362 aa).

Residues 1–20 form the signal peptide; sequence MHFLQNAVVAATMGAALAAA. Residues 21-25 constitute a propeptide that is removed on maturation; it reads APLEK. Cys28 and Cys43 are oxidised to a cystine. 6 PbH1 repeats span residues 155-184, 185-206, 207-227, 236-257, 265-287, and 299-344; these read ADHL…DIGQ, STYI…AINS, GEHI…SIGS, VNDV…RIKT, VENV…VVEQ, and TNGV…DVTG. Asp199 (proton donor) is an active-site residue. The cysteines at positions 201 and 217 are disulfide-linked. Residue His221 is part of the active site. Cys327 and Cys332 are oxidised to a cystine. An N-linked (GlcNAc...) asparagine glycan is attached at Asn334. A disulfide bond links Cys351 and Cys360.

Belongs to the glycosyl hydrolase 28 family.

The protein localises to the secreted. It carries out the reaction (1,4-alpha-D-galacturonosyl)n+m + H2O = (1,4-alpha-D-galacturonosyl)n + (1,4-alpha-D-galacturonosyl)m.. Its function is as follows. Involved in maceration and soft-rotting of plant tissue. Hydrolyzes the 1,4-alpha glycosidic bonds of de-esterified pectate in the smooth region of the plant cell wall. The protein is Probable endopolygalacturonase B (pgaB) of Aspergillus niger (strain ATCC MYA-4892 / CBS 513.88 / FGSC A1513).